A 146-amino-acid polypeptide reads, in one-letter code: Hemoglobin subunit beta (146 aa).

N-acetylvaline is present on valine 1. One can recognise a Globin domain in the interval 2–146 (QLSGEEKAAV…VANALAHKYH (145 aa)). Phosphoserine is present on serine 44. N6-acetyllysine is present on lysine 59. Histidine 63 contacts heme b. Lysine 82 is modified (N6-acetyllysine). Heme b is bound at residue histidine 92. Residue cysteine 93 is modified to S-nitrosocysteine. An N6-acetyllysine modification is found at lysine 144.

The protein belongs to the globin family. Heterotetramer of two alpha chains and two beta chains. Red blood cells.

Its function is as follows. Involved in oxygen transport from the lung to the various peripheral tissues. The chain is Hemoglobin subunit beta (HBB) from Equus caballus (Horse).